A 236-amino-acid polypeptide reads, in one-letter code: Biosynthetic peptidoglycan transglycosylase (236 aa).

The helical transmembrane segment at 12–31 threads the bilayer; it reads ALLWFAAGSVLVVLVLRWVP.

This sequence belongs to the glycosyltransferase 51 family.

The protein resides in the cell inner membrane. The enzyme catalyses [GlcNAc-(1-&gt;4)-Mur2Ac(oyl-L-Ala-gamma-D-Glu-L-Lys-D-Ala-D-Ala)](n)-di-trans,octa-cis-undecaprenyl diphosphate + beta-D-GlcNAc-(1-&gt;4)-Mur2Ac(oyl-L-Ala-gamma-D-Glu-L-Lys-D-Ala-D-Ala)-di-trans,octa-cis-undecaprenyl diphosphate = [GlcNAc-(1-&gt;4)-Mur2Ac(oyl-L-Ala-gamma-D-Glu-L-Lys-D-Ala-D-Ala)](n+1)-di-trans,octa-cis-undecaprenyl diphosphate + di-trans,octa-cis-undecaprenyl diphosphate + H(+). It functions in the pathway cell wall biogenesis; peptidoglycan biosynthesis. Its function is as follows. Peptidoglycan polymerase that catalyzes glycan chain elongation from lipid-linked precursors. The polypeptide is Biosynthetic peptidoglycan transglycosylase (Pseudomonas savastanoi pv. phaseolicola (strain 1448A / Race 6) (Pseudomonas syringae pv. phaseolicola (strain 1448A / Race 6))).